A 417-amino-acid chain; its full sequence is Fatty-acid peroxygenase (417 aa).

Position 363 (cysteine 363) interacts with heme.

The protein belongs to the cytochrome P450 family. It depends on heme as a cofactor.

It carries out the reaction a 1,2-saturated fatty acid + H2O2 = a 2-hydroxy fatty acid + H2O. The catalysed reaction is a 2,3-saturated fatty acid + H2O2 = a 3-hydroxy fatty acid + H2O. The enzyme catalyses tetradecanoate + H2O2 = (3R)-hydroxytetradecanoate + H2O. It catalyses the reaction tetradecanoate + H2O2 = (2R)-hydroxytetradecanoate + H2O. It carries out the reaction tetradecanoate + H2O2 = (2S)-hydroxytetradecanoate + H2O. Its function is as follows. Catalyzes the alpha- and beta-hydroxylation of myristic acid in the presence of hydrogen peroxide. The polypeptide is Fatty-acid peroxygenase (cypC) (Bacillus subtilis (strain 168)).